A 273-amino-acid polypeptide reads, in one-letter code: Shikimate dehydrogenase (NADP(+)) (273 aa).

Residues 15–17 and T62 each bind shikimate; that span reads SLS. K66 functions as the Proton acceptor in the catalytic mechanism. E78 contacts NADP(+). Shikimate-binding residues include N87 and D102. Residues 126-130, 149-154, I215, and G238 each bind NADP(+); these read GAGGA and NRTPER.

This sequence belongs to the shikimate dehydrogenase family. As to quaternary structure, homodimer.

It catalyses the reaction shikimate + NADP(+) = 3-dehydroshikimate + NADPH + H(+). It participates in metabolic intermediate biosynthesis; chorismate biosynthesis; chorismate from D-erythrose 4-phosphate and phosphoenolpyruvate: step 4/7. Functionally, involved in the biosynthesis of the chorismate, which leads to the biosynthesis of aromatic amino acids. Catalyzes the reversible NADPH linked reduction of 3-dehydroshikimate (DHSA) to yield shikimate (SA). The sequence is that of Shikimate dehydrogenase (NADP(+)) from Desulfitobacterium hafniense (strain Y51).